The following is a 211-amino-acid chain: Proteasome subunit beta (211 aa).

Residues 1-9 constitute a propeptide, removed in mature form; by autocatalysis; that stretch reads MSEAETLKG. The active-site Nucleophile is threonine 10.

Belongs to the peptidase T1B family. As to quaternary structure, the 20S proteasome core is composed of 14 alpha and 14 beta subunits that assemble into four stacked heptameric rings, resulting in a barrel-shaped structure. The two inner rings, each composed of seven catalytic beta subunits, are sandwiched by two outer rings, each composed of seven alpha subunits. The catalytic chamber with the active sites is on the inside of the barrel. Has a gated structure, the ends of the cylinder being occluded by the N-termini of the alpha-subunits. Is capped at one or both ends by the proteasome regulatory ATPase, PAN.

The protein localises to the cytoplasm. It catalyses the reaction Cleavage of peptide bonds with very broad specificity.. With respect to regulation, the formation of the proteasomal ATPase PAN-20S proteasome complex, via the docking of the C-termini of PAN into the intersubunit pockets in the alpha-rings, triggers opening of the gate for substrate entry. Interconversion between the open-gate and close-gate conformations leads to a dynamic regulation of the 20S proteasome proteolysis activity. Its function is as follows. Component of the proteasome core, a large protease complex with broad specificity involved in protein degradation. This is Proteasome subunit beta from Methanosphaerula palustris (strain ATCC BAA-1556 / DSM 19958 / E1-9c).